Consider the following 343-residue polypeptide: Methylthioribose-1-phosphate isomerase (343 aa).

Substrate is bound by residues 48–50 (RGA), arginine 88, and glutamine 193. The Proton donor role is filled by aspartate 234. 244–245 (NK) lines the substrate pocket.

Belongs to the eIF-2B alpha/beta/delta subunits family. MtnA subfamily.

It catalyses the reaction 5-(methylsulfanyl)-alpha-D-ribose 1-phosphate = 5-(methylsulfanyl)-D-ribulose 1-phosphate. It functions in the pathway amino-acid biosynthesis; L-methionine biosynthesis via salvage pathway; L-methionine from S-methyl-5-thio-alpha-D-ribose 1-phosphate: step 1/6. Its function is as follows. Catalyzes the interconversion of methylthioribose-1-phosphate (MTR-1-P) into methylthioribulose-1-phosphate (MTRu-1-P). This chain is Methylthioribose-1-phosphate isomerase, found in Thermotoga petrophila (strain ATCC BAA-488 / DSM 13995 / JCM 10881 / RKU-1).